Reading from the N-terminus, the 288-residue chain is DegV domain-containing protein MYPU_3590 (288 aa).

Residues 3–275 (IAIVIDSSSG…LGAIAISLVK (273 aa)) form the DegV domain. Hexadecanoate is bound by residues Ser61 and Ser92.

Functionally, may bind long-chain fatty acids, such as palmitate, and may play a role in lipid transport or fatty acid metabolism. The protein is DegV domain-containing protein MYPU_3590 of Mycoplasmopsis pulmonis (strain UAB CTIP) (Mycoplasma pulmonis).